A 201-amino-acid chain; its full sequence is FMN-dependent NADH:quinone oxidoreductase (201 aa).

FMN contacts are provided by residues serine 10, 16 to 18 (SQS), 96 to 99 (MYNF), and 140 to 143 (SRGG).

The protein belongs to the azoreductase type 1 family. As to quaternary structure, homodimer. FMN is required as a cofactor.

It catalyses the reaction 2 a quinone + NADH + H(+) = 2 a 1,4-benzosemiquinone + NAD(+). The catalysed reaction is N,N-dimethyl-1,4-phenylenediamine + anthranilate + 2 NAD(+) = 2-(4-dimethylaminophenyl)diazenylbenzoate + 2 NADH + 2 H(+). Quinone reductase that provides resistance to thiol-specific stress caused by electrophilic quinones. Functionally, also exhibits azoreductase activity. Catalyzes the reductive cleavage of the azo bond in aromatic azo compounds to the corresponding amines. The sequence is that of FMN-dependent NADH:quinone oxidoreductase from Shigella flexneri serotype 5b (strain 8401).